Reading from the N-terminus, the 379-residue chain is UDP-4-amino-4-deoxy-L-arabinose--oxoglutarate aminotransferase (379 aa).

Lysine 182 carries the N6-(pyridoxal phosphate)lysine modification.

Belongs to the DegT/DnrJ/EryC1 family. ArnB subfamily. In terms of assembly, homodimer. The cofactor is pyridoxal 5'-phosphate.

The catalysed reaction is UDP-4-amino-4-deoxy-beta-L-arabinose + 2-oxoglutarate = UDP-beta-L-threo-pentopyranos-4-ulose + L-glutamate. Its pathway is nucleotide-sugar biosynthesis; UDP-4-deoxy-4-formamido-beta-L-arabinose biosynthesis; UDP-4-deoxy-4-formamido-beta-L-arabinose from UDP-alpha-D-glucuronate: step 2/3. It functions in the pathway bacterial outer membrane biogenesis; lipopolysaccharide biosynthesis. In terms of biological role, catalyzes the conversion of UDP-4-keto-arabinose (UDP-Ara4O) to UDP-4-amino-4-deoxy-L-arabinose (UDP-L-Ara4N). The modified arabinose is attached to lipid A and is required for resistance to polymyxin and cationic antimicrobial peptides. In Enterobacter sp. (strain 638), this protein is UDP-4-amino-4-deoxy-L-arabinose--oxoglutarate aminotransferase.